The chain runs to 456 residues: Equilibrative nucleoside transporter 2 (456 aa).

The Cytoplasmic segment spans residues 1–12 (MAHGNAPRDSYH). A helical membrane pass occupies residues 13 to 29 (LVGISFFILGLGTLLPW). Residues 30–68 (NFFITAIPYFQGRLAGTNSSAETPSTNHTSPTDTFNFNN) lie on the Extracellular side of the membrane. N-linked (GlcNAc...) asparagine glycosylation is found at Asn-47 and Asn-56. Residues 69 to 93 (WVTLLSQLPLLLFTLLNSFLYQCIP) traverse the membrane as a helical segment. Residues 94–97 (ESVR) are Cytoplasmic-facing. Residues 98–116 (ILGSLLAILLLFALTAALV) traverse the membrane as a helical segment. The Extracellular segment spans residues 117 to 124 (KVDLSPGL). A helical membrane pass occupies residues 125–143 (FFSITMASVWFINSFCAVL). Residues 144–160 (QGSLFGQLGTMPSTYST) lie on the Cytoplasmic side of the membrane. The chain crosses the membrane as a helical span at residues 161–185 (LFLSGQGLAGIFAALAMLTSLASGV). Over 186–192 (DPQTSAL) the chain is Extracellular. Residues 193–213 (GYFITPCVGILLSIICYLSLP) traverse the membrane as a helical segment. Topologically, residues 214–291 (HLKFARYYLT…VFVVFRKIWL (78 aa)) are cytoplasmic. Ser-251 is modified (phosphoserine). The helical transmembrane segment at 292-311 (TALCLVLVFTVTLSVFPAIT) threads the bilayer. At 312 to 323 (AMVTTSSNSPGK) the chain is on the extracellular side. The helical transmembrane segment at 324–342 (WSQFFNPICCFLLFNVMDW) threads the bilayer. Residues 343–359 (LGRSLTSYFLWPDEDSQ) lie on the Cytoplasmic side of the membrane. A helical transmembrane segment spans residues 360–378 (LLPLLVCLRFLFVPLFMLC). Topologically, residues 379-393 (HVPQRARLPIIFWQD) are extracellular. The chain crosses the membrane as a helical span at residues 394-413 (AYFITFMLLFAISNGYFVSL). Residues 414–431 (TMCLAPRQVLPHEREVAG) are Cytoplasmic-facing. Residues 432–452 (ALMTFFLALGLSCGASLSFLF) form a helical membrane-spanning segment. Residues 453-456 (KALL) are Extracellular-facing.

Belongs to the SLC29A/ENT transporter (TC 2.A.57) family. As to expression, expressed in squeletal muscles. Expressed in testis at the blood-brain-barrier.

Its subcellular location is the apical cell membrane. It is found in the basolateral cell membrane. The enzyme catalyses uridine(out) = uridine(in). The catalysed reaction is inosine(in) = inosine(out). It carries out the reaction adenosine(in) = adenosine(out). It catalyses the reaction thymidine(in) = thymidine(out). The enzyme catalyses hypoxanthine(out) = hypoxanthine(in). The catalysed reaction is adenine(out) = adenine(in). It carries out the reaction cytidine(in) = cytidine(out). It catalyses the reaction thymine(out) = thymine(in). The enzyme catalyses uracil(in) = uracil(out). The catalysed reaction is guanine(out) = guanine(in). It carries out the reaction guanosine(in) = guanosine(out). Bidirectional uniporter involved in the facilitative transport of nucleosides and nucleobases, and contributes to maintaining their cellular homeostasis. Functions as a Na(+)-independent, passive transporter. Involved in the transport of nucleosides such as inosine, adenosine, uridine, thymidine, cytidine and guanosine. Also able to transport purine nucleobases (hypoxanthine, adenine, guanine) and pyrimidine nucleobases (thymine, uracil). Involved in nucleoside transport at basolateral membrane of kidney cells, allowing liver absorption of nucleoside metabolites. Mediates apical nucleoside uptake into Sertoli cells, thereby regulating the transport of nucleosides in testis across the blood-testis-barrier. Mediates both the influx and efflux of hypoxanthine in skeletal muscle microvascular endothelial cells to control the amount of intracellular hypoxanthine available for xanthine oxidase-mediated ROS production. This is Equilibrative nucleoside transporter 2 from Rattus norvegicus (Rat).